The primary structure comprises 253 residues: Triosephosphate isomerase (253 aa).

A substrate-binding site is contributed by 9-11 (NWK). Histidine 97 functions as the Electrophile in the catalytic mechanism. Glutamate 169 (proton acceptor) is an active-site residue. Substrate-binding positions include glycine 175, serine 215, and 236–237 (GG).

This sequence belongs to the triosephosphate isomerase family. Homodimer.

The protein resides in the cytoplasm. It catalyses the reaction D-glyceraldehyde 3-phosphate = dihydroxyacetone phosphate. Its pathway is carbohydrate biosynthesis; gluconeogenesis. The protein operates within carbohydrate degradation; glycolysis; D-glyceraldehyde 3-phosphate from glycerone phosphate: step 1/1. Functionally, involved in the gluconeogenesis. Catalyzes stereospecifically the conversion of dihydroxyacetone phosphate (DHAP) to D-glyceraldehyde-3-phosphate (G3P). This chain is Triosephosphate isomerase, found in Staphylococcus saprophyticus subsp. saprophyticus (strain ATCC 15305 / DSM 20229 / NCIMB 8711 / NCTC 7292 / S-41).